The following is a 924-amino-acid chain: Lipoxygenase 7, chloroplastic (924 aa).

The transit peptide at 1-61 directs the protein to the chloroplast; that stretch reads MLRPQLNPSS…GQGSSRVVVV (61 aa). The 131-residue stretch at 88–218 folds into the PLAT domain; it reads AVATIKVTVG…VGDEGTPSKR (131 aa). The Lipoxygenase domain maps to 225-924; that stretch reads TYLPGQTPAG…GMGIPNSTSI (700 aa). Residues 231-315 are disordered; it reads TPAGLRSYRK…PKSETRKGNV (85 aa). Composition is skewed to basic and acidic residues over residues 239-262 and 302-315; these read RKNDLQQKRGDGTGEREADDRVYD and SKKDPKSETRKGNV. 5 residues coordinate Fe cation: His581, His586, His773, Asn777, and Ile924.

Belongs to the lipoxygenase family. Requires Fe cation as cofactor.

It is found in the plastid. It localises to the chloroplast. The enzyme catalyses (9Z,12Z)-octadecadienoate + O2 = (13S)-hydroperoxy-(9Z,11E)-octadecadienoate. The catalysed reaction is (9Z,12Z,15Z)-octadecatrienoate + O2 = (13S)-hydroperoxy-(9Z,11E,15Z)-octadecatrienoate. It functions in the pathway lipid metabolism; oxylipin biosynthesis. Plant lipoxygenase may be involved in a number of diverse aspects of plant physiology including growth and development, pest resistance, and senescence or responses to wounding. This lipoxygenase introduces molecular oxygen exclusively into the C-13 position of linoleic and linolenic acids. This chain is Lipoxygenase 7, chloroplastic (CM-LOX1), found in Oryza sativa subsp. japonica (Rice).